We begin with the raw amino-acid sequence, 95 residues long: Phospholipase A2 inhibitor gammaCdcPLI (95 aa).

Intrachain disulfides connect Cys2-Cys26, Cys5-Cys12, Cys19-Cys30, and Cys61-Cys77.

As to quaternary structure, forms dimers or higher order oligomers in a temperature-dependent manner in vitro. As to expression, expressed by the liver.

The protein localises to the secreted. Inhibits the enzymatic activity of basic and acidic PLA2 from B.jararacussu and B.pauloensis, respectively, in a dose-dependent manner. Also inhibits myotoxicity and cytotoxicity of BnSp-7 of B.pauloensis. In Crotalus durissus collilineatus (Brazilian rattlesnake), this protein is Phospholipase A2 inhibitor gammaCdcPLI.